A 494-amino-acid chain; its full sequence is Cobyric acid synthase (494 aa).

In terms of domain architecture, GATase cobBQ-type spans 252-444 (DLNIAVIRLP…LHGLFDNGPW (193 aa)). C333 (nucleophile) is an active-site residue. The active site involves H436.

Belongs to the CobB/CobQ family. CobQ subfamily.

It participates in cofactor biosynthesis; adenosylcobalamin biosynthesis. Its function is as follows. Catalyzes amidations at positions B, D, E, and G on adenosylcobyrinic A,C-diamide. NH(2) groups are provided by glutamine, and one molecule of ATP is hydrogenolyzed for each amidation. The protein is Cobyric acid synthase of Nostoc punctiforme (strain ATCC 29133 / PCC 73102).